A 4776-amino-acid chain; its full sequence is Pneumococcal serine-rich repeat protein (4776 aa).

A signal peptide spans 1-72 (MTETVEDKVS…VVLGTISTSN (72 aa)). Ser-73, Ser-75, Ser-76, Ser-78, Ser-80, Ser-82, Ser-94, Ser-100, Ser-108, Ser-110, Ser-118, Ser-120, and Ser-121 each carry an O-linked (GlcNAc...) serine glycan. A serine-rich repeat region 1, SRR1 region spans residues 73–121 (SASSTSLSASESASTSASESASTSASTSASTSASESASTSASTSISASS). The tract at residues 86–112 (STSASESASTSASTSASTSASESASTS) is disordered. A self aggregating domain region spans residues 122-166 (TVVGSQTAAATEATAKKVEEDRKKPASDYVASVTNVNLQSYAKRR). The basic region, BR stretch occupies residues 122-394 (TVVGSQTAAA…QSKSLSVSAS (273 aa)). Positions 164-168 (KRRKR) match the Host furin cleavage recognition motif. A keratin 10-binding domain, cell-type specific binding to lung-derived cells region spans residues 273–341 (TQTMLTLGSD…GYGLTSSWTV (69 aa)). The tract at residues 395–4712 (QSASASASTS…ASTSASASAS (4318 aa)) is serine-rich repeat region 2, SRR2. Disordered stretches follow at residues 481–627 (ASTS…STSA), 861–889 (ASASTSASESASTSASASASTSASESAST), 925–965 (ASAS…SASA), 1052–1085 (SASTSASESASTSASASASTSASESASTSASASA), 1123–1153 (ASASTSASESASTSTSASASTSASESASTSA), 1171–1199 (ASASTSASASASTSASASTSASESASTSA), 1311–1357 (ASES…SAST), 1671–1731 (ASES…SESA), 1792–1863 (SASE…STSA), 2105–2133 (ASASTSASESASTSASASASTSASESAST), 2169–2209 (ASAS…SASA), 2296–2329 (SASTSASESASTSASASASTSASESASTSASASA), 2367–2397 (ASASTSASESASTSTSASASTSASESASTSA), 2415–2443 (ASASTSASASASTSASASTSASESASTSA), 2571–2631 (ASES…SESA), 2737–2805 (ESAS…STSA), 2855–3113 (ASAS…STSA), 3347–3375 (ASASTSASESASTSASASASTSASESAST), 3411–3451 (ASAS…SASA), 3538–3571 (SASTSASESASTSASASASTSASESASTSASASA), 3609–3639 (ASASTSASESASTSTSASASTSASESASTSA), 3657–3685 (ASASTSASASASTSASASTSASESASTSA), 3797–3843 (ASES…SAST), 4167–4197 (ASASTSASESASTSTSASASTSASESASTSA), 4215–4243 (ASASTSASASASTSASASTSASESASTSA), 4355–4401 (ASES…SAST), and 4706–4747 (SASA…GTES). Positions 4715–4747 (VSNSANHSNSQVGNTSGSTGKSQKELPNTGTES) are enriched in polar residues. Positions 4740–4744 (LPNTG) match the LPXTG sorting signal motif. Residue Thr-4743 is modified to Pentaglycyl murein peptidoglycan amidated threonine. Positions 4744 to 4776 (GTESSIGSVLLGVLAAVTGIGLVAKRRKRDEEE) are cleaved as a propeptide — removed by sortase.

The protein belongs to the serine-rich repeat protein (SRRP) family. In terms of assembly, binds to human and mouse protein keratin 10 (KRT10). Post-translationally, glycosylated. Only truncated substrates greater than 25 residues long are glycosylated by the Gtf1-Gtf2 complex in vitro; only Ser residues have been seen to be glycosylated. Based on electrophoretic mobility it is probable that most of the Ser residues in SSR1 and SSR2 are O-GlcNAcylated. Subsequent glycosylation by up to 7 sugar transferases (Gtf3 and GlyAT, GlyB, GlyD, GlyE, GlyF and GlyG) is able to generate very high sugar polymorphism. In terms of processing, can be cleaved by human furin protease; this fragment contributes to self-aggregation and possibly biofilm formation in vitro.

The protein localises to the secreted. It localises to the cell wall. It is found in the cell surface. In terms of biological role, protein that allows bacteria to adhere to mammalian host cells. Required for full virulence in mouse infection models when infected intranasally. Required for adhesion to host cells in vitro and for persistence in the lower respiratory tract. Binds host keratin 10 (KRT10) on lung cells which mediates adhesion via the C-terminus of the basic region (BR, residues 273-341); glycosylation of either protein is not required for the interaction. A region in the N-terminus (residues 122-166) self aggregates, contributing to mature biofilm formation. The basic region (BR, residues 187-385) also self aggregates; the BR binds DNA which enhances self aggregation. The protein is Pneumococcal serine-rich repeat protein of Streptococcus pneumoniae serotype 4 (strain ATCC BAA-334 / TIGR4).